Consider the following 379-residue polypeptide: Oxysterol-binding protein-related protein 4C (379 aa).

Belongs to the OSBP family. Expressed in flowers.

May be involved in the transport of sterols. The chain is Oxysterol-binding protein-related protein 4C (ORP4C) from Arabidopsis thaliana (Mouse-ear cress).